A 740-amino-acid chain; its full sequence is Glycerol dehydrogenase large subunit (740 aa).

The first 29 residues, 1–29 (MRRPYLLATAAGLALACSPLIAHAQFAPA), serve as a signal peptide directing secretion. Disordered regions lie at residues 28 to 105 (PAGA…GDWV) and 442 to 468 (LPVE…PWSV). The span at 34 to 43 (EPSSSVPGPG) shows a compositional bias: low complexity. The segment covering 46 to 58 (SEPTENSPKSQSY) has biased composition (polar residues).

Belongs to the bacterial PQQ dehydrogenase family. Pyrroloquinoline quinone serves as cofactor.

The protein resides in the secreted. It carries out the reaction glycerol + A = dihydroxyacetone + AH2. Functionally, catalyzes the oxidation of glycerol to glycerone. Also acts, more slowly, on a number of other polyols including D-sorbitol, D-arabinitol, D-mannitol, meso-erythritol, adonitol and propylene glycol. The sequence is that of Glycerol dehydrogenase large subunit (sldA) from Gluconobacter thailandicus.